A 155-amino-acid polypeptide reads, in one-letter code: 3-hydroxyacyl-[acyl-carrier-protein] dehydratase FabZ (155 aa).

His54 is a catalytic residue.

It belongs to the thioester dehydratase family. FabZ subfamily.

It localises to the cytoplasm. It catalyses the reaction a (3R)-hydroxyacyl-[ACP] = a (2E)-enoyl-[ACP] + H2O. Involved in unsaturated fatty acids biosynthesis. Catalyzes the dehydration of short chain beta-hydroxyacyl-ACPs and long chain saturated and unsaturated beta-hydroxyacyl-ACPs. The protein is 3-hydroxyacyl-[acyl-carrier-protein] dehydratase FabZ of Burkholderia mallei (strain NCTC 10247).